Consider the following 960-residue polypeptide: Valine--tRNA ligase (960 aa).

Positions 42-52 match the 'HIGH' region motif; sequence PNITGNLHMGH. A 'KMSKS' region motif is present at residues 553 to 557; the sequence is KMSKS. Position 556 (K556) interacts with ATP. Positions 879–950 form a coiled coil; sequence VLKAIDKEIE…LSQQLESLHD (72 aa).

This sequence belongs to the class-I aminoacyl-tRNA synthetase family. ValS type 1 subfamily. As to quaternary structure, monomer.

It is found in the cytoplasm. The catalysed reaction is tRNA(Val) + L-valine + ATP = L-valyl-tRNA(Val) + AMP + diphosphate. In terms of biological role, catalyzes the attachment of valine to tRNA(Val). As ValRS can inadvertently accommodate and process structurally similar amino acids such as threonine, to avoid such errors, it has a 'posttransfer' editing activity that hydrolyzes mischarged Thr-tRNA(Val) in a tRNA-dependent manner. This Buchnera aphidicola subsp. Schizaphis graminum (strain Sg) protein is Valine--tRNA ligase.